Reading from the N-terminus, the 119-residue chain is Ribonuclease P protein component (119 aa).

This sequence belongs to the RnpA family. As to quaternary structure, consists of a catalytic RNA component (M1 or rnpB) and a protein subunit.

It carries out the reaction Endonucleolytic cleavage of RNA, removing 5'-extranucleotides from tRNA precursor.. In terms of biological role, RNaseP catalyzes the removal of the 5'-leader sequence from pre-tRNA to produce the mature 5'-terminus. It can also cleave other RNA substrates such as 4.5S RNA. The protein component plays an auxiliary but essential role in vivo by binding to the 5'-leader sequence and broadening the substrate specificity of the ribozyme. This is Ribonuclease P protein component from Mycolicibacterium paratuberculosis (strain ATCC BAA-968 / K-10) (Mycobacterium paratuberculosis).